A 250-amino-acid polypeptide reads, in one-letter code: 3alpha-hydroxysteroid dehydrogenase (250 aa).

The NADP(+) site is built by asparagine 93, tyrosine 158, and lysine 162. Tyrosine 158 serves as the catalytic Proton acceptor.

It belongs to the short-chain dehydrogenases/reductases (SDR) family.

It carries out the reaction lithocholate + NADP(+) = 3-oxo-5beta-cholan-24-oate + NADPH + H(+). It catalyses the reaction deoxycholate + NADP(+) = 12alpha-hydroxy-3-oxo-5beta-cholan-24-oate + NADPH + H(+). The catalysed reaction is deoxycholate + NAD(+) = 12alpha-hydroxy-3-oxo-5beta-cholan-24-oate + NADH + H(+). The enzyme catalyses cholate + NADP(+) = 7alpha,12alpha-dihydroxy-3-oxo-5beta-cholan-24-oate + NADPH + H(+). It carries out the reaction chenodeoxycholate + NADP(+) = 3-oxochenodeoxycholate + NADPH + H(+). Involved in the modification of secondary bile acids into iso-bile acids (3beta-bile acids) via epimerization of the 3-OH group through a 3-oxo-intermediate. Catalyzes the oxidation of deoxycholate (DCA) and lithocholate (LCA) to yield 12-alpha-hydroxy-3-oxo-5-beta-cholan-24-oate (3-oxo-DCA) and 3-oxo-5-beta-cholan-24-oate (3-oxo-LCA), respectively. Is also able to catalyze the oxidation of cholate (CA) and chenodeoxycholate (CDCA) into 3-dehydrocholate (3-oxo-CA) and 7-alpha-hydroxy-3-oxo-5-beta-cholan-24-oate (3-oxo-CDCA), respectively. Can also catalyze the reverse reactions in vitro. Accepts both NADPH and NADH as cosubstrates. The conversion of the abundant bile acid DCA into isoDCA by the gut bacterium R.gnavus favors the growth of the keystone commensal genus Bacteroides, since isoDCA is less cytotoxic than its parent compound, DCA; iso-bile acids have thus a potential role in modulating gut community composition. This chain is 3alpha-hydroxysteroid dehydrogenase, found in Mediterraneibacter gnavus (strain ATCC 29149 / DSM 114966 / JCM 6515 / VPI C7-9) (Ruminococcus gnavus).